Here is a 160-residue protein sequence, read N- to C-terminus: Ubiquitin-conjugating enzyme E2 16 (160 aa).

In terms of domain architecture, UBC core spans 3-153 (SSIKRLHKEY…VRCTTYLYAK (151 aa)). The active-site Glycyl thioester intermediate is Cys-90.

It belongs to the ubiquitin-conjugating enzyme family.

The enzyme catalyses S-ubiquitinyl-[E1 ubiquitin-activating enzyme]-L-cysteine + [E2 ubiquitin-conjugating enzyme]-L-cysteine = [E1 ubiquitin-activating enzyme]-L-cysteine + S-ubiquitinyl-[E2 ubiquitin-conjugating enzyme]-L-cysteine.. Its pathway is protein modification; protein ubiquitination. Catalyzes the covalent attachment of ubiquitin to other proteins. The sequence is that of Ubiquitin-conjugating enzyme E2 16 (ubc16) from Schizosaccharomyces pombe (strain 972 / ATCC 24843) (Fission yeast).